Reading from the N-terminus, the 46-residue chain is Esculentin-1HSa (46 aa).

C40 and C46 are disulfide-bonded.

As to expression, expressed by the skin glands.

The protein resides in the secreted. Its function is as follows. Has antibacterial activity against the Gram-positive bacterium S.aureus ATCC 25923 (MIC=12 uM) and the Gram-negative bacterium E.coli ATCC 25726 (MIC=12 uM). The sequence is that of Esculentin-1HSa from Odorrana hosii (Hose's rock frog).